Reading from the N-terminus, the 348-residue chain is Organic solute transporter alpha-like protein 3 (348 aa).

The Extracellular segment spans residues 1–49; it reads MAKEHGAMRSVLNLIGSVMLPQDTSNCSDRHDTPSAPEFLSHLQPFQTV. An N-linked (GlcNAc...) asparagine glycan is attached at asparagine 26. Residues 50 to 70 traverse the membrane as a helical segment; the sequence is LLSIASFSTTIVLCLSLIHWF. Topologically, residues 71–84 are cytoplasmic; that stretch reads YVYKYVSIEKRRNK. Residues 85–105 traverse the membrane as a helical segment; that stretch reads LYWLIAVFPVACSCSFIAMCV. Over 106-109 the chain is Extracellular; that stretch reads PRTA. Residues 110–130 traverse the membrane as a helical segment; sequence VILTCIGVLYYLMCLFVIVSL. Over 131–180 the chain is Cytoplasmic; that stretch reads ARHLFGGRESFSTCLQYDDRPIDFRSPPFCCIIPKLPTARSTEKNIRRLE. Residues 181-201 form a helical membrane-spanning segment; it reads WCVLQAPIVRSIIIFLDVVAV. Over 202 to 213 the chain is Extracellular; that stretch reads AEMREDATPYIR. Residues 214–234 form a helical membrane-spanning segment; it reads YSDMASLCSLLLAIFGVHTLA. Over 235–240 the chain is Cytoplasmic; sequence RVTSNK. The chain crosses the membrane as a helical span at residues 241 to 261; sequence LSAYCFMSMFRLVDISLLFFS. Residues 262 to 291 are Extracellular-facing; it reads AQQPMIFQNVLLRFNLISCGPLLNAQENAY. The chain crosses the membrane as a helical span at residues 292–312; that stretch reads FVCNFIITCEMLLLSVLATWL. At 313–348 the chain is on the cytoplasmic side; sequence LAPRHNAMFDAYRPSMALSETTASLNETEQSMILDH.

The protein belongs to the OST-alpha family.

Its subcellular location is the cell membrane. Its function is as follows. Probable transporter. This chain is Organic solute transporter alpha-like protein 3 (osta-3), found in Caenorhabditis elegans.